The following is a 205-amino-acid chain: Peptidyl-tRNA hydrolase (205 aa).

TRNA is bound at residue tyrosine 14. Histidine 19 functions as the Proton acceptor in the catalytic mechanism. The tRNA site is built by tyrosine 64, asparagine 66, and asparagine 112.

This sequence belongs to the PTH family. As to quaternary structure, monomer.

It localises to the cytoplasm. The catalysed reaction is an N-acyl-L-alpha-aminoacyl-tRNA + H2O = an N-acyl-L-amino acid + a tRNA + H(+). Hydrolyzes ribosome-free peptidyl-tRNAs (with 1 or more amino acids incorporated), which drop off the ribosome during protein synthesis, or as a result of ribosome stalling. Functionally, catalyzes the release of premature peptidyl moieties from peptidyl-tRNA molecules trapped in stalled 50S ribosomal subunits, and thus maintains levels of free tRNAs and 50S ribosomes. This is Peptidyl-tRNA hydrolase from Parvibaculum lavamentivorans (strain DS-1 / DSM 13023 / NCIMB 13966).